The following is a 177-amino-acid chain: Probable DNA-directed RNA polymerase subunit delta (177 aa).

An HTH HARE-type domain is found at 14–81 (CSMIEVVHSV…GENRWGLRSW (68 aa)). The disordered stretch occupies residues 91–177 (ILPQPKPKKK…DETEEEEEEL (87 aa)). Over residues 106 to 177 (DGFDDYIEED…DETEEEEEEL (72 aa)) the composition is skewed to acidic residues.

It belongs to the RpoE family. RNAP is composed of a core of 2 alpha, a beta and a beta' subunits. The core is associated with a delta subunit and one of several sigma factors.

Participates in both the initiation and recycling phases of transcription. In the presence of the delta subunit, RNAP displays an increased specificity of transcription, a decreased affinity for nucleic acids, and an increased efficiency of RNA synthesis because of enhanced recycling. The chain is Probable DNA-directed RNA polymerase subunit delta from Bacillus cereus (strain G9842).